We begin with the raw amino-acid sequence, 266 residues long: Phosphonates import ATP-binding protein PhnC (266 aa).

The ABC transporter domain occupies 2-246 (IEIKNVSKTY…KFAEIYGRPI (245 aa)). 35 to 42 (GLSGAGKS) contributes to the ATP binding site.

Belongs to the ABC transporter superfamily. Phosphonates importer (TC 3.A.1.9.1) family. The complex is composed of two ATP-binding proteins (PhnC), two transmembrane proteins (PhnE) and a solute-binding protein (PhnD).

Its subcellular location is the cell membrane. It catalyses the reaction phosphonate(out) + ATP + H2O = phosphonate(in) + ADP + phosphate + H(+). Part of the ABC transporter complex PhnCDE involved in phosphonates import. Responsible for energy coupling to the transport system. This is Phosphonates import ATP-binding protein PhnC from Shouchella clausii (strain KSM-K16) (Alkalihalobacillus clausii).